Reading from the N-terminus, the 186-residue chain is Peptidyl-tRNA hydrolase (186 aa).

Y17 contacts tRNA. The active-site Proton acceptor is H22. Residues Y64 and N66 each contribute to the tRNA site.

The protein belongs to the PTH family. Monomer.

It is found in the cytoplasm. The catalysed reaction is an N-acyl-L-alpha-aminoacyl-tRNA + H2O = an N-acyl-L-amino acid + a tRNA + H(+). In terms of biological role, hydrolyzes ribosome-free peptidyl-tRNAs (with 1 or more amino acids incorporated), which drop off the ribosome during protein synthesis, or as a result of ribosome stalling. Functionally, catalyzes the release of premature peptidyl moieties from peptidyl-tRNA molecules trapped in stalled 50S ribosomal subunits, and thus maintains levels of free tRNAs and 50S ribosomes. In Methylacidiphilum infernorum (isolate V4) (Methylokorus infernorum (strain V4)), this protein is Peptidyl-tRNA hydrolase.